A 509-amino-acid polypeptide reads, in one-letter code: uncharacterized protein (509 aa).

A run of 13 helical transmembrane segments spans residues 14–34 (SAFT…WVIP), 117–137 (TIEA…IGVI), 158–178 (EFFI…TCGI), 188–208 (ILVP…GAIF), 209–229 (LAAS…VIAS), 240–260 (IGFR…YLYW), 303–323 (LILT…MVGG), 324–344 (WWFP…MFIS), 359–379 (ASEL…NLVL), 399–419 (MPGS…GLIV), 423–443 (SGLA…VGIP), 458–478 (MLFL…QIPF), and 484–504 (FVMP…VVQV).

This sequence to E.coli YfcC. The protein to B.subtilis YcgA.

The protein resides in the cell membrane. This is an uncharacterized protein from Haemophilus influenzae (strain ATCC 51907 / DSM 11121 / KW20 / Rd).